Reading from the N-terminus, the 257-residue chain is Imidazole glycerol phosphate synthase subunit HisF (257 aa).

Catalysis depends on residues Asp12 and Asp131.

This sequence belongs to the HisA/HisF family. Heterodimer of HisH and HisF.

The protein resides in the cytoplasm. The catalysed reaction is 5-[(5-phospho-1-deoxy-D-ribulos-1-ylimino)methylamino]-1-(5-phospho-beta-D-ribosyl)imidazole-4-carboxamide + L-glutamine = D-erythro-1-(imidazol-4-yl)glycerol 3-phosphate + 5-amino-1-(5-phospho-beta-D-ribosyl)imidazole-4-carboxamide + L-glutamate + H(+). It functions in the pathway amino-acid biosynthesis; L-histidine biosynthesis; L-histidine from 5-phospho-alpha-D-ribose 1-diphosphate: step 5/9. In terms of biological role, IGPS catalyzes the conversion of PRFAR and glutamine to IGP, AICAR and glutamate. The HisF subunit catalyzes the cyclization activity that produces IGP and AICAR from PRFAR using the ammonia provided by the HisH subunit. The protein is Imidazole glycerol phosphate synthase subunit HisF of Burkholderia orbicola (strain MC0-3).